Here is a 93-residue protein sequence, read N- to C-terminus: Large ribosomal subunit protein uL23 (93 aa).

Belongs to the universal ribosomal protein uL23 family. In terms of assembly, part of the 50S ribosomal subunit. Contacts protein L29, and trigger factor when it is bound to the ribosome.

In terms of biological role, one of the early assembly proteins it binds 23S rRNA. One of the proteins that surrounds the polypeptide exit tunnel on the outside of the ribosome. Forms the main docking site for trigger factor binding to the ribosome. The polypeptide is Large ribosomal subunit protein uL23 (Campylobacter fetus subsp. fetus (strain 82-40)).